The primary structure comprises 298 residues: ADP-ribosylation factor GTPase-activating protein effector protein 2 (298 aa).

Ser2 bears the N-acetylserine mark. One can recognise an Arf-GAP domain in the interval 8-130 (KKALSALLRD…KWIGDLSSIE (123 aa)). Residues 23-47 (CADCKAQLHPRWASWSLGVFICIKC) form a C4-type zinc finger. The disordered stretch occupies residues 137–180 (EPVLHKPSANHSLPASNARLDQSSNSLQKTQTQPPSHLLSTSRS). The segment covering 145–171 (ANHSLPASNARLDQSSNSLQKTQTQPP) has biased composition (polar residues). Residues Ser180, Ser183, and Ser207 each carry the phosphoserine modification.

It localises to the cytoplasm. It is found in the golgi apparatus. Functionally, GTPase-activating protein for the ADP ribosylation factor family. In Saccharomyces cerevisiae (strain ATCC 204508 / S288c) (Baker's yeast), this protein is ADP-ribosylation factor GTPase-activating protein effector protein 2 (AGE2).